Consider the following 501-residue polypeptide: Glutamyl-tRNA(Gln) amidotransferase subunit A (501 aa).

Residues lysine 80 and serine 155 each act as charge relay system in the active site. The Acyl-ester intermediate role is filled by serine 179.

This sequence belongs to the amidase family. GatA subfamily. In terms of assembly, heterotrimer of A, B and C subunits.

The enzyme catalyses L-glutamyl-tRNA(Gln) + L-glutamine + ATP + H2O = L-glutaminyl-tRNA(Gln) + L-glutamate + ADP + phosphate + H(+). Allows the formation of correctly charged Gln-tRNA(Gln) through the transamidation of misacylated Glu-tRNA(Gln) in organisms which lack glutaminyl-tRNA synthetase. The reaction takes place in the presence of glutamine and ATP through an activated gamma-phospho-Glu-tRNA(Gln). The polypeptide is Glutamyl-tRNA(Gln) amidotransferase subunit A (Cupriavidus pinatubonensis (strain JMP 134 / LMG 1197) (Cupriavidus necator (strain JMP 134))).